The primary structure comprises 167 residues: Endoribonuclease YbeY (167 aa).

Positions 131, 135, and 141 each coordinate Zn(2+).

It belongs to the endoribonuclease YbeY family. Zn(2+) serves as cofactor.

The protein localises to the cytoplasm. Functionally, single strand-specific metallo-endoribonuclease involved in late-stage 70S ribosome quality control and in maturation of the 3' terminus of the 16S rRNA. In Rickettsia conorii (strain ATCC VR-613 / Malish 7), this protein is Endoribonuclease YbeY.